The primary structure comprises 224 residues: Deoxyribose-phosphate aldolase (224 aa).

Residue aspartate 92 is the Proton donor/acceptor of the active site. Lysine 155 functions as the Schiff-base intermediate with acetaldehyde in the catalytic mechanism. Lysine 184 acts as the Proton donor/acceptor in catalysis.

This sequence belongs to the DeoC/FbaB aldolase family. DeoC type 1 subfamily.

Its subcellular location is the cytoplasm. The enzyme catalyses 2-deoxy-D-ribose 5-phosphate = D-glyceraldehyde 3-phosphate + acetaldehyde. The protein operates within carbohydrate degradation; 2-deoxy-D-ribose 1-phosphate degradation; D-glyceraldehyde 3-phosphate and acetaldehyde from 2-deoxy-alpha-D-ribose 1-phosphate: step 2/2. Catalyzes a reversible aldol reaction between acetaldehyde and D-glyceraldehyde 3-phosphate to generate 2-deoxy-D-ribose 5-phosphate. This chain is Deoxyribose-phosphate aldolase, found in Clostridium perfringens (strain SM101 / Type A).